Here is a 203-residue protein sequence, read N- to C-terminus: Proteasome subunit beta 1 (203 aa).

The propeptide at 1-7 (MTEKLKG) is removed in mature form; by autocatalysis. The Nucleophile role is filled by T8.

The protein belongs to the peptidase T1B family. In terms of assembly, the 20S proteasome core is composed of 14 alpha and 14 beta subunits that assemble into four stacked heptameric rings, resulting in a barrel-shaped structure. The two inner rings, each composed of seven catalytic beta subunits, are sandwiched by two outer rings, each composed of seven alpha subunits. The catalytic chamber with the active sites is on the inside of the barrel. Has a gated structure, the ends of the cylinder being occluded by the N-termini of the alpha-subunits. Is capped at one or both ends by the proteasome regulatory ATPase, PAN.

The protein resides in the cytoplasm. The enzyme catalyses Cleavage of peptide bonds with very broad specificity.. With respect to regulation, the formation of the proteasomal ATPase PAN-20S proteasome complex, via the docking of the C-termini of PAN into the intersubunit pockets in the alpha-rings, triggers opening of the gate for substrate entry. Interconversion between the open-gate and close-gate conformations leads to a dynamic regulation of the 20S proteasome proteolysis activity. Functionally, component of the proteasome core, a large protease complex with broad specificity involved in protein degradation. The sequence is that of Proteasome subunit beta 1 from Thermococcus kodakarensis (strain ATCC BAA-918 / JCM 12380 / KOD1) (Pyrococcus kodakaraensis (strain KOD1)).